A 290-amino-acid polypeptide reads, in one-letter code: Nitrogenase iron protein 2 (290 aa).

An ATP-binding site is contributed by 10–17; sequence GKGGIGKS. Residue Cys-98 coordinates [4Fe-4S] cluster. Position 101 is an ADP-ribosylarginine; by dinitrogenase reductase ADP-ribosyltransferase (Arg-101). Position 133 (Cys-133) interacts with [4Fe-4S] cluster.

This sequence belongs to the NifH/BchL/ChlL family. Homodimer. The cofactor is [4Fe-4S] cluster. In terms of processing, the reversible ADP-ribosylation of Arg-101 inactivates the nitrogenase reductase and regulates nitrogenase activity.

The catalysed reaction is N2 + 8 reduced [2Fe-2S]-[ferredoxin] + 16 ATP + 16 H2O = H2 + 8 oxidized [2Fe-2S]-[ferredoxin] + 2 NH4(+) + 16 ADP + 16 phosphate + 6 H(+). The key enzymatic reactions in nitrogen fixation are catalyzed by the nitrogenase complex, which has 2 components: the iron protein (component 2) and a component 1 which is either a molybdenum-iron protein, a vanadium-iron, or an iron-iron protein. This Azotobacter chroococcum mcd 1 protein is Nitrogenase iron protein 2 (vnfH).